A 412-amino-acid polypeptide reads, in one-letter code: [Pyruvate dehydrogenase (acetyl-transferring)] kinase isozyme 4, mitochondrial (412 aa).

One can recognise a Histidine kinase domain in the interval 138–368 (ILEYKDNCTV…DAIIYLKALS (231 aa)). ATP is bound by residues 254-261 (ELFKNAMR), D293, 312-313 (ST), and 329-334 (GFGYGL).

Belongs to the PDK/BCKDK protein kinase family. As to quaternary structure, homodimer. Interacts with the pyruvate dehydrogenase complex subunit DLAT, and is part of the multimeric pyruvate dehydrogenase complex that contains multiple copies of pyruvate dehydrogenase (E1), dihydrolipoamide acetyltransferase (DLAT, E2) and lipoamide dehydrogenase (DLD, E3). Ubiquitous; highest levels of expression in heart and skeletal muscle.

Its subcellular location is the mitochondrion matrix. It catalyses the reaction L-seryl-[pyruvate dehydrogenase E1 alpha subunit] + ATP = O-phospho-L-seryl-[pyruvate dehydrogenase E1 alpha subunit] + ADP + H(+). In terms of biological role, kinase that plays a key role in regulation of glucose and fatty acid metabolism and homeostasis via phosphorylation of the pyruvate dehydrogenase subunits PDHA1 and PDHA2. This inhibits pyruvate dehydrogenase activity, and thereby regulates metabolite flux through the tricarboxylic acid cycle, down-regulates aerobic respiration and inhibits the formation of acetyl-coenzyme A from pyruvate. Inhibition of pyruvate dehydrogenase decreases glucose utilization and increases fat metabolism in response to prolonged fasting and starvation. Plays an important role in maintaining normal blood glucose levels under starvation, and is involved in the insulin signaling cascade. Via its regulation of pyruvate dehydrogenase activity, plays an important role in maintaining normal blood pH and in preventing the accumulation of ketone bodies under starvation. In the fed state, mediates cellular responses to glucose levels and to a high-fat diet. Regulates both fatty acid oxidation and de novo fatty acid biosynthesis. Plays a role in the generation of reactive oxygen species. Protects detached epithelial cells against anoikis. Plays a role in cell proliferation via its role in regulating carbohydrate and fatty acid metabolism. The sequence is that of [Pyruvate dehydrogenase (acetyl-transferring)] kinase isozyme 4, mitochondrial (Pdk4) from Rattus norvegicus (Rat).